The primary structure comprises 87 residues: Small ribosomal subunit protein bS20 (87 aa).

A compositionally biased stretch (basic residues) spans 1 to 11 (MAHHKSAIKRI). The segment at 1–26 (MAHHKSAIKRIKQNEKRNARNRHQKS) is disordered.

The protein belongs to the bacterial ribosomal protein bS20 family.

Functionally, binds directly to 16S ribosomal RNA. In Trichlorobacter lovleyi (strain ATCC BAA-1151 / DSM 17278 / SZ) (Geobacter lovleyi), this protein is Small ribosomal subunit protein bS20.